The primary structure comprises 289 residues: Nucleotide-binding protein MS1718 (289 aa).

An ATP-binding site is contributed by 8–15 (GRSGAGKS). A GTP-binding site is contributed by 56–59 (DIRN).

Belongs to the RapZ-like family.

Functionally, displays ATPase and GTPase activities. The protein is Nucleotide-binding protein MS1718 of Mannheimia succiniciproducens (strain KCTC 0769BP / MBEL55E).